A 339-amino-acid chain; its full sequence is DnaJ homolog subfamily C member 22 (339 aa).

The TM2 domain occupies G4–W50. Transmembrane regions (helical) follow at residues L5–L25, H30–W50, F81–S101, F105–G125, L135–I155, V185–A205, and F218–L238. Residues L277–S339 enclose the J domain.

It localises to the membrane. Functionally, may function as a co-chaperone. The chain is DnaJ homolog subfamily C member 22 (Dnajc22) from Mus musculus (Mouse).